Reading from the N-terminus, the 1412-residue chain is DNA-directed RNA polymerase subunit beta' (1412 aa).

Zn(2+) contacts are provided by Cys-70, Cys-72, Cys-85, and Cys-88. Asp-460, Asp-462, and Asp-464 together coordinate Mg(2+). Zn(2+)-binding residues include Cys-819, Cys-893, Cys-900, and Cys-903. A disordered region spans residues 1393–1412 (EAFEFGTPSAPAEEPQHPAE).

Belongs to the RNA polymerase beta' chain family. As to quaternary structure, the RNAP catalytic core consists of 2 alpha, 1 beta, 1 beta' and 1 omega subunit. When a sigma factor is associated with the core the holoenzyme is formed, which can initiate transcription. Mg(2+) is required as a cofactor. Zn(2+) serves as cofactor.

The enzyme catalyses RNA(n) + a ribonucleoside 5'-triphosphate = RNA(n+1) + diphosphate. In terms of biological role, DNA-dependent RNA polymerase catalyzes the transcription of DNA into RNA using the four ribonucleoside triphosphates as substrates. This chain is DNA-directed RNA polymerase subunit beta', found in Burkholderia pseudomallei (strain 1106a).